A 438-amino-acid polypeptide reads, in one-letter code: Cytochrome P450 monooxygenase claJ (438 aa).

Cys-378 contacts heme.

This sequence belongs to the cytochrome P450 family. Heme is required as a cofactor.

The protein operates within secondary metabolite biosynthesis. Its function is as follows. Cytochrome P450 monooxygenase; part of the cla gene cluster that produces clavatol and ortho-quinone methide. The clavatol biosynthesis cluster cla and the terrestric acid cluster tra are both involved in the production of peniphenones and penilactones. The non-reducing PKS claF is responsible for the formation of clavatol from successive condensations of 3 malonyl-CoA units, presumably with a simple acetyl-CoA starter unit, and 2 methylation steps. The esterase claE probably collaborates with claF by catalyzing the hydrolysis of ACP-bound acyl intermediates to free the ACP from stalled intermediates. The clavatol oxidase claD then converts clavatol to hydroxyclavatol. Spontaneous dehydration of hydroxyclavatol leads to the accumulation of the highly active ortho-quinone methide. On the other hand, the PKS-NRPS hybrid traA is involved in the formation of crustosic acid, with the help of traB and traD. The polyketide synthase module (PKS) of traA is responsible for the synthesis of the polyketide backbone via the condensation of an acetyl-CoA starter unit with 3 malonyl-CoA units. The downstream nonribosomal peptide synthetase (NRPS) module then amidates the carboxyl end of the polyketide with L-malic acid. Because traA lacks a designated enoylreductase (ER) domain, the required activity is provided the enoyl reductase traG. Crustosic acid undergoes decarboxylation and isomerization to the terrestric acid, catalyzed by the 2-oxoglutarate-dependent dioxygenase traH. Both acids are further converted to the 2 gamma-butyrolactones (R)-5-methyltetronic acid and (S)-5-carboxylmethyltetronic acid, with involvement of the cytochrome P450 monooxygenase claJ. Spontaneous addition of the methide to these gamma-butyrolactones leads to peniphenone D and penilactone D, which undergo again stereospecific attacking by methide to give penilactones A and B. This chain is Cytochrome P450 monooxygenase claJ, found in Penicillium crustosum (Blue mold fungus).